The chain runs to 749 residues: MSNTLPVTEFLLSKYYELSNTPATDSSSLFKWLYHKTLSRKQLLISDLSSQKKHAISYDQWNDIASRLDDLTGLSEWKTIDESSLYNYKLLQDLTIRMRHLRTTHDYHRLLYLIRTKWVRNLGNMNNVNLYRHSHTGTKQIIHDYLEESQAVLTALIHQSNMNDHYLLGILQQTRRNIGRTALVLSGGSTFGLFHIGVLAALFESDLMPKVISGSSAGAIVASIFCVHTTQEIPSLLTNVLNMEFNIFNDDNSKSPNENLLIKISRFCQNGTWFNNQPLINTMLSFLGNLTFREAYNKTGKILNITVSPASIYEQPKLLNNLTAPNVLIWSAVCASCSLPGVFPSTPLFEKDPHTGKIKEWGATNLHLSNMKFMDGSVDNDMPISRLSEMFNVDHIIACQVNIHVFPLLKFSNTCVGGEIEKEITARFRNQVTKIFKFFSDETIHFLDILKELEFHPYLMTKLKHLFLQQYSGNVTILPDLSMVGQFHEVLKNPSQLFLLHQTTLGARATWPKISMIQNNCGQEFALDKAITFLKEKIIISSSIKNPLQFYQPRFSEQIKSLSIMDADLPGVDLEESSSNSLSIIKSPNKTAAPGRFPLQPLPSPSSTFNKRKMDMLSPSPSPSTSPQRSKSSFTQQGTRQKANSLSFAIGASSLRLKKSPLKVPSRPQFKKRSSYYNQNMSAEMRKNRKKSGTISSYDVQTNSEDFPIPAIENGSFDNTLFNPSRFPMDAMSAATNDNFMNNSDIFQN.

The HXXXXD acyltransferase motif signature appears at 54–59; the sequence is HAISYD. The PNPLA domain occupies 183–388; that stretch reads LVLSGGSTFG…DNDMPISRLS (206 aa). The short motif at 214 to 218 is the GXSXG element; the sequence is GSSAG. Catalysis depends on S216, which acts as the Nucleophile. N270, N289, N297, N304, and N321 each carry an N-linked (GlcNAc...) asparagine glycan. D375 functions as the Proton acceptor in the catalytic mechanism. 2 N-linked (GlcNAc...) asparagine glycosylation sites follow: N474 and N589. Residues 585 to 643 are disordered; it reads IKSPNKTAAPGRFPLQPLPSPSSTFNKRKMDMLSPSPSPSTSPQRSKSSFTQQGTRQKA. Residues 623–633 are compositionally biased toward low complexity; it reads PSTSPQRSKSS. Residues 634–643 are compositionally biased toward polar residues; the sequence is FTQQGTRQKA. S645 is subject to Phosphoserine. N680, N714, and N742 each carry an N-linked (GlcNAc...) asparagine glycan.

Its subcellular location is the lipid droplet. The catalysed reaction is a triacylglycerol + H2O = a diacylglycerol + a fatty acid + H(+). The enzyme catalyses 1-(9Z-octadecenoyl)-sn-glycero-3-phosphate + (9Z)-octadecenoyl-CoA = 1,2-di-(9Z-octadecenoyl)-sn-glycero-3-phosphate + CoA. It carries out the reaction 1-(9Z-octadecenoyl)-sn-glycero-3-phosphate + hexadecanoyl-CoA = 1-hexadecanoyl-2-(9Z-octadecenoyl)-sn-glycero-3-phosphate + CoA. Loses its lipolytic activity in cells lacking nonpolar lipids, but retains its side activity as lysophospholipid acyltransferase. Lipid particle-localized triacylglycerol (TAG) lipase. The lipid droplet/particle is a lipid storage compartment which serves as a depot of energy and building blocks for membrane lipid biosynthesis. Involved in the mobilization of the non-polar storage lipids triacylglycerols (TAGs) from lipid particles by hydrolysis of TAGs, releasing and supplying specific fatty acids to the appropriate metabolic pathways. Also catalyzes the acylation of lysophosphatidic acid (LPA). This chain is Triacylglycerol lipase 5 (TGL5), found in Saccharomyces cerevisiae (strain ATCC 204508 / S288c) (Baker's yeast).